A 110-amino-acid polypeptide reads, in one-letter code: MTSYLWFLLAAVFEIAGCYAFWMWLRLDRSAWWIAPGLLSLVLFALILTRVEASFAGRAYAAYGGVYIVASLAWLALIEKTRPMLSDWLGAALCLAGAAIILFAPRLHTS.

4 helical membrane-spanning segments follow: residues 5 to 25, 31 to 51, 59 to 79, and 84 to 104; these read LWFL…WMWL, AWWI…LTRV, AYAA…ALIE, and MLSD…ILFA.

This sequence belongs to the UPF0060 family.

The protein localises to the cell inner membrane. The protein is UPF0060 membrane protein Pmen_1247 of Ectopseudomonas mendocina (strain ymp) (Pseudomonas mendocina).